Here is a 262-residue protein sequence, read N- to C-terminus: Acyl-[acyl-carrier-protein]--UDP-N-acetylglucosamine O-acyltransferase (262 aa).

It belongs to the transferase hexapeptide repeat family. LpxA subfamily. Homotrimer.

It is found in the cytoplasm. It catalyses the reaction a (3R)-hydroxyacyl-[ACP] + UDP-N-acetyl-alpha-D-glucosamine = a UDP-3-O-[(3R)-3-hydroxyacyl]-N-acetyl-alpha-D-glucosamine + holo-[ACP]. It participates in glycolipid biosynthesis; lipid IV(A) biosynthesis; lipid IV(A) from (3R)-3-hydroxytetradecanoyl-[acyl-carrier-protein] and UDP-N-acetyl-alpha-D-glucosamine: step 1/6. In terms of biological role, involved in the biosynthesis of lipid A, a phosphorylated glycolipid that anchors the lipopolysaccharide to the outer membrane of the cell. This chain is Acyl-[acyl-carrier-protein]--UDP-N-acetylglucosamine O-acyltransferase, found in Paraburkholderia xenovorans (strain LB400).